A 214-amino-acid polypeptide reads, in one-letter code: Endosomal/vacuolar adapter protein YPT35 (214 aa).

Residues 1–63 (MNDKISFLPP…ATITRTRPRR (63 aa)) form a disordered region. A PxP motif is present at residues 5–15 (ISFLPPEPIQL). Residues 16-31 (LDEDSTEPELDIDSQQ) show a composition bias toward acidic residues. Residues 38 to 58 (SASNSNDSTSHSNDCGATITR) are compositionally biased toward low complexity. Ser-65 and Ser-66 each carry phosphoserine. Positions 73–213 (FQKAHVSDCT…IQFLEPSKRV (141 aa)) constitute a PX domain.

This sequence belongs to the YPT35 family. Interacts with RBD2, YIF1, YIP1 and YIP4.

The protein resides in the endosome membrane. It localises to the vacuole membrane. In terms of biological role, recruits the lipid transfer protein VPS13 to endosomal and vacuolar membranes. The sequence is that of Endosomal/vacuolar adapter protein YPT35 (YPT35) from Saccharomyces cerevisiae (strain YJM789) (Baker's yeast).